We begin with the raw amino-acid sequence, 147 residues long: Hemoglobin subunit epsilon (147 aa).

Residues 3-147 (HFTAEEKNAI…VANALAHKYH (145 aa)) form the Globin domain. Ser51 bears the Phosphoserine mark. Heme b-binding residues include His64 and His93.

The protein belongs to the globin family. Heterotetramer of two alpha chains and two epsilon chains in early embryonic hemoglobin Gower-2; two zeta chains and two epsilon chains in early embryonic hemoglobin Gower-1. Red blood cells.

The epsilon chain is a beta-type chain of early mammalian embryonic hemoglobin. This Sminthopsis crassicaudata (Fat-tailed dunnart) protein is Hemoglobin subunit epsilon (HBE1).